The following is a 361-amino-acid chain: Palmitoyltransferase ZDHHC2 (361 aa).

Over 1–15 (MAPSGSRSFDCWRVL) the chain is Cytoplasmic. The helical transmembrane segment at 16 to 36 (YWIPVLFISLIVAWSYYAYVV) threads the bilayer. The Lumenal portion of the chain corresponds to 37 to 50 (QLCIETIENMGEKT). Residues 51–71 (VYLLIYHLLFLMFVWSYWQTI) form a helical membrane-spanning segment. Over 72–167 (YSKPMNPLKE…NNCVGFANYK (96 aa)) the chain is Cytoplasmic. The DHHC domain maps to 124-174 (RYCDRCLLLKPDRCHHCSACDMCILKMDHHCPWVNNCVGFANYKFFMLFLA). Cys154 serves as the catalytic S-palmitoyl cysteine intermediate. Residues 168–188 (FFMLFLAYSLLYCLFVTATDM) form a helical membrane-spanning segment. At 189–207 (QYFIQFWTNGLPDTQAKFH) the chain is on the lumenal side. The helical transmembrane segment at 208–228 (IMFLFFAASTFSVSLAFLFAY) threads the bilayer. Residues 229–361 (HCWLVCKNRS…NPALTIEKET (133 aa)) lie on the Cytoplasmic side of the membrane. The interval 296 to 361 (NPDPEQPSIP…NPALTIEKET (66 aa)) is mediates localization to plasma membrane and recycling endosomes. A compositionally biased stretch (pro residues) spans 299–308 (PEQPSIPPGR). The tract at residues 299-361 (PEQPSIPPGR…NPALTIEKET (63 aa)) is disordered. The segment covering 331–340 (SRLLNNGQTD) has biased composition (polar residues). The Non-canonical dileucine endocytic signal signature appears at 333–334 (LL). The NPxY-like endocytic signal motif lies at 352–355 (NPAL).

This sequence belongs to the DHHC palmitoyltransferase family. As to quaternary structure, monomer. Homodimer. The monomeric form has a higher catalytic activity. Post-translationally, autopalmitoylated.

Its subcellular location is the endoplasmic reticulum membrane. The protein localises to the golgi apparatus membrane. The protein resides in the postsynaptic density. It is found in the postsynaptic recycling endosome membrane. It localises to the cell membrane. It carries out the reaction L-cysteinyl-[protein] + hexadecanoyl-CoA = S-hexadecanoyl-L-cysteinyl-[protein] + CoA. It catalyses the reaction L-cysteinyl-[protein] + tetradecanoyl-CoA = S-tetradecanoyl-L-cysteinyl-[protein] + CoA. The enzyme catalyses L-cysteinyl-[protein] + octadecanoyl-CoA = S-octadecanoyl-L-cysteinyl-[protein] + CoA. Functionally, palmitoyltransferase that catalyzes the addition of palmitate onto various protein substrates and is involved in a variety of cellular processes. Has no stringent fatty acid selectivity and in addition to palmitate can also transfer onto target proteins myristate from tetradecanoyl-CoA and stearate from octadecanoyl-CoA. This chain is Palmitoyltransferase ZDHHC2, found in Danio rerio (Zebrafish).